Reading from the N-terminus, the 595-residue chain is MGQCYGKVNQSKQNGEEEANTTTYVVSGDGNQIQPLTPVNYGRAKNTPARSSNPSPWPSPFPHGSASPLPSGVSPSPARTSTPRRFFRRPFPPPSPAKHIKASLIKRLGVKPKEGPIPEERGTEPEQSLDKSFGYGKNFGAKYELGKEVGRGHFGHTCSGRGKKGDIKDHPIAVKIISKAKMTTAIAIEDVRREVKLLKSLSGHKYLIKYYDACEDANNVYIVMELCDGGELLDRILARGGKYPEDDAKAIVVQILTVVSFCHLQGVVHRDLKPENFLFTSSREDSDLKLIDFGLSDFIRPDERLNDIVGSAYYVAPEVLHRSYSLEADIWSIGVITYILLCGSRPFWARTESGIFRTVLRTEPNYDDVPWPSCSSEGKDFVKRLLNKDYRKRMSAVQALTHPWLRDDSRVIPLDILIYKLVKAYLHATPLRRAALKALAKALTENELVYLRAQFMLLGPNKDGSVSLENFKTALMQNATDAMRESRVPEILHTMESLAYRKMYFEEFCAAAISIHQLEAVDAWEEIATAGFQHFETEGNRVITIEELARELNVGASAYGHLRDWVRSSDGKLSYLGFTKFLHGVTLRAAHARPR.

A disordered region spans residues 1 to 131; that stretch reads MGQCYGKVNQ…GTEPEQSLDK (131 aa). G2 carries the N-myristoyl glycine lipid modification. The span at 20–37 shows a compositional bias: polar residues; that stretch reads NTTTYVVSGDGNQIQPLT. Residues 111–124 are compositionally biased toward basic and acidic residues; sequence KPKEGPIPEERGTE. The Protein kinase domain maps to 143 to 405; the sequence is YELGKEVGRG…AVQALTHPWL (263 aa). Residues 149–157 and K175 contribute to the ATP site; that span reads VGRGHFGHT. D271 serves as the catalytic Proton acceptor. The residue at position 311 (S311) is a Phosphoserine. S353 bears the Phosphoserine; by CPK1 and CPK34 mark. Positions 409-439 are autoinhibitory domain; sequence SRVIPLDILIYKLVKAYLHATPLRRAALKAL. The segment at 428-448 is calmodulin binding (CaMBD); sequence ATPLRRAALKALAKALTENEL. EF-hand domains lie at 446 to 482, 483 to 518, 519 to 558, and 559 to 588; these read NELVYLRAQFMLLGPNKDGSVSLENFKTALMQNATDA, MRESRVPEILHTMESLAYRKMYFEEFCAAAISIHQL, EAVDAWEEIATAGFQHFETEGNRVITIEELARELNVGASA, and YGHLRDWVRSSDGKLSYLGFTKFLHGVTLR. 10 residues coordinate Ca(2+): N461, D463, S465, K502, E507, N540, E547, S568, D570, and K572. S574 carries the phosphoserine modification.

The protein belongs to the protein kinase superfamily. Ser/Thr protein kinase family. CDPK subfamily. Binds calmodulin (CaM) in a calcium-dependent manner. Interacts with GLN1-1. Autophosphorylated. As to expression, ubiquitously expressed with higher levels in siliques and roots, especially at the root cap. Particularly present in vascular bundles of stems and leaves.

It is found in the cytoplasm. It localises to the membrane. It carries out the reaction L-seryl-[protein] + ATP = O-phospho-L-seryl-[protein] + ADP + H(+). It catalyses the reaction L-threonyl-[protein] + ATP = O-phospho-L-threonyl-[protein] + ADP + H(+). Its activity is regulated as follows. Not activated by calcium. Autophosphorylation may play an important role in the regulation of the kinase activity. Stimulated by magnesium ions (optimum at 10-15 mM) and manganese ions. In terms of biological role, may play a role in signal transduction pathways that involve calcium as a second messenger. Serine/threonine kinase that phosphorylates histone H3 an GLN1-1. In Arabidopsis thaliana (Mouse-ear cress), this protein is CDPK-related kinase 3 (CRK3).